The primary structure comprises 1593 residues: Autotransporter CRAC (1593 aa).

An N-terminal signal peptide occupies residues methionine 1–alanine 54. The segment covering glycine 65 to asparagine 85 has biased composition (polar residues). Disordered stretches follow at residues glycine 65 to serine 100 and lysine 1267 to proline 1286. A compositionally biased stretch (low complexity) spans serine 86 to serine 97. A compositionally biased stretch (polar residues) spans aspartate 1269 to threonine 1280. The Autotransporter domain maps to asparagine 1325–phenylalanine 1593.

In terms of processing, glycosylated by heptosyltransferas BAHTCr. Glycosylation is required for adhesion to mammalian cells and colonization of the mouse host gastrointestinal tract.

It is found in the cell outer membrane. Its function is as follows. Autotransporter required for the colonization of the mouse host gastrointestinal tract, possibly by mediating bacteria adhesion to host cells. The polypeptide is Autotransporter CRAC (Citrobacter rodentium (strain ICC168) (Citrobacter freundii biotype 4280)).